The primary structure comprises 210 residues: MHPFFQELQQGSQKLGLSLSDEALTLLLKYQDALVLWNKAYNLTAIRDPKEMLVKHLLDSLSILKDLPAGRLLDVGTGGGMPGMIIALCQPERSCVLLDSNGKKIRFLKQFIADLKLKNVIAVQTRVENQDTIDELGQFDVITSRAFASLTDFVEAARPYLHEQSIIAAMKGLIPVEEMEELKQEFSCKVIELHVPRLDEQRHLLLLQRI.

S-adenosyl-L-methionine-binding positions include glycine 76, methionine 81, 127 to 128, and arginine 145; that span reads VE.

It belongs to the methyltransferase superfamily. RNA methyltransferase RsmG family.

Its subcellular location is the cytoplasm. It carries out the reaction guanosine(527) in 16S rRNA + S-adenosyl-L-methionine = N(7)-methylguanosine(527) in 16S rRNA + S-adenosyl-L-homocysteine. In terms of biological role, specifically methylates the N7 position of guanine in position 527 of 16S rRNA. This Acinetobacter baumannii (strain AB307-0294) protein is Ribosomal RNA small subunit methyltransferase G.